The sequence spans 378 residues: Diacetylchitobiose uptake system ATP-binding protein MsiK (378 aa).

One can recognise an ABC transporter domain in the interval valine 4–isoleucine 236. Glycine 38–serine 45 is a binding site for ATP.

Belongs to the ABC transporter superfamily. As to quaternary structure, the DasABC-MsiK complex is composed of two ATP-binding proteins (MsiK), two transmembrane proteins (DasB and DasC) and a solute-binding protein (DasA). The NgcEFG-MsiK complex is composed of two ATP-binding proteins (MsiK), two transmembrane proteins (NgcF and NgcG) and a solute-binding protein (NgcE).

Its subcellular location is the cell membrane. In terms of biological role, part of the ABC transporter complexes DasABC-MsiK and NgcEFG-MsiK involved in N,N'-diacetylchitobiose ((GlcNAc)2) uptake. Responsible for energy coupling to the transport system. This is Diacetylchitobiose uptake system ATP-binding protein MsiK from Streptomyces coelicolor (strain ATCC BAA-471 / A3(2) / M145).